We begin with the raw amino-acid sequence, 467 residues long: Glutamate--tRNA ligase (467 aa).

The 'HIGH' region motif lies at 9 to 19 (PSPTGYLHIGG). The 'KMSKS' region signature appears at 237–241 (KLSKR). Lysine 240 is a binding site for ATP.

Belongs to the class-I aminoacyl-tRNA synthetase family. Glutamate--tRNA ligase type 1 subfamily. In terms of assembly, monomer.

The protein resides in the cytoplasm. The catalysed reaction is tRNA(Glu) + L-glutamate + ATP = L-glutamyl-tRNA(Glu) + AMP + diphosphate. In terms of biological role, catalyzes the attachment of glutamate to tRNA(Glu) in a two-step reaction: glutamate is first activated by ATP to form Glu-AMP and then transferred to the acceptor end of tRNA(Glu). This chain is Glutamate--tRNA ligase, found in Xylella fastidiosa (strain 9a5c).